The chain runs to 40 residues: uncharacterized protein (40 aa).

This is an uncharacterized protein from Haemophilus influenzae (strain ATCC 51907 / DSM 11121 / KW20 / Rd).